The following is a 1665-amino-acid chain: Protein scribble homolog (1665 aa).

Residues Met-1–Glu-804 form a sufficient for targeting to adherens junction and to inhibit cell proliferation region. Ser-37 carries the post-translational modification Phosphoserine. LRR repeat units lie at residues Ser-37–Leu-58, Asn-60–Phe-81, Gln-83–Cys-104, Ala-106–Leu-127, Ser-129–Leu-150, Asn-152–Val-174, Lys-175–Pro-197, Asn-198–Leu-219, Arg-221–Ala-243, Leu-244–Leu-265, Gln-267–Cys-288, Asn-290–Thr-312, Lys-313–Cys-334, Ala-336–Thr-357, Glu-359–Asn-381, and Leu-382–Asp-402. Thr-378 carries the phosphothreonine modification. Disordered stretches follow at residues Pro-422–Ile-615 and Arg-635–Ser-689. Positions Gly-428 to Cys-437 are enriched in polar residues. Residues Asp-452–Ala-463 show a composition bias toward acidic residues. A coiled-coil region spans residues Glu-455–Thr-475. Position 475 is a phosphothreonine (Thr-475). 2 stretches are compositionally biased toward basic and acidic residues: residues Ser-479–Glu-494 and Phe-570–Asp-580. Phosphoserine is present on Ser-583. A coiled-coil region spans residues Arg-653–Ala-687. The span at Glu-657 to Glu-681 shows a compositional bias: acidic residues. A phosphothreonine mark is found at Thr-674 and Thr-675. Residues Ser-694 and Ser-750 each carry the phosphoserine modification. Residues Ile-703–Arg-1215 are interaction with ARHGEF7. The region spanning Thr-714–Arg-801 is the PDZ 1 domain. A required for interaction with VIM region spans residues Thr-714–Thr-1180. Thr-812 bears the Phosphothreonine mark. Ser-821, Ser-861, and Ser-925 each carry phosphoserine. PDZ domains follow at residues Ala-848–Thr-936, Glu-990–Pro-1079, and Glu-1086–Thr-1180. Residues Ser-1126, Ser-1206, Ser-1209, Ser-1212, Ser-1218, Ser-1262, Ser-1265, and Ser-1284 each carry the phosphoserine modification. Basic and acidic residues predominate over residues Ile-1213–Leu-1228. The interval Ile-1213–Asn-1246 is disordered. Disordered regions lie at residues Ala-1263–Pro-1325 and Val-1341–Arg-1501. Residues Gly-1264–Lys-1277 show a composition bias toward polar residues. Omega-N-methylarginine is present on Lys-1291. The residue at position 1299 (Ala-1299) is a Phosphoserine. At Arg-1312 the chain carries Omega-N-methylarginine. Ser-1320 is modified (phosphoserine). Thr-1353 is subject to Phosphothreonine. The residue at position 1359 (Ser-1359) is a Phosphoserine. Residues Ser-1364–Val-1376 show a composition bias toward basic and acidic residues. Residue Ser-1389 is modified to Phosphoserine. Positions Leu-1390–Thr-1421 form a coiled coil. A compositionally biased stretch (basic and acidic residues) spans Asp-1394–Lys-1406. Phosphoserine is present on residues Ser-1455 and Ser-1458. Residues Ala-1471 to Arg-1482 are compositionally biased toward basic and acidic residues. 3 positions are modified to phosphoserine: Ser-1485, Ser-1496, and Ser-1518. The disordered stretch occupies residues Leu-1530–Leu-1577. The span at Gln-1534–Ala-1547 shows a compositional bias: basic and acidic residues. Ser-1551 carries the phosphoserine modification. Thr-1555 is modified (phosphothreonine). Phosphoserine occurs at positions 1557, 1571, and 1601. The segment at Gly-1632–Ser-1665 is disordered.

Belongs to the LAP (LRR and PDZ) protein family. Interacts with UBE3A. Interacts with PAK1 and PAK2. Interacts (via PDZ domains) with VANGL2. Interacts (via PDZ domains) with LPP and TRIP6; the interaction is direct. Interacts (via PDZ domains) with TJP2. Interacts (via PDZ domains) with APC; may mediate APC targeting to adherens junctions of epithelial cells. Interacts (via PDZ domains) with TSHR; regulates TSHR trafficking and function. Interacts with ARHGEF7 and GIT1; interacts directly with ARHGEF7. Interacts with CTNNB1. Interacts with MAPK12. Interacts (via PDZ domains 1 and 3) with MCC. Interacts with DLG5. Interacts with STK4/MST1 and LATS1 in the presence of DLG5. Interacts (via PDZ domain 3) with CRTAM (via PDZ-binding motif); the interaction promotes CRTAM and SCRIB polarization in a subset of CD4+ T-cells. Interacts with YES1, when YES1 is in a closed conformation; the interaction facilitates YES1 autophosphorylation. Interacts (via PDZ domains) with VIM; the interaction protects SCRIB from proteasomal degradation and facilitates SCRIB localization to intermediate filaments, the interaction is reduced by cell contact inhibition. Ubiquitinated; targeted for UBE3A-dependent multiubiquitination and degraded. In terms of processing, palmitoylated. Could be depalmitoylated by LYPLA1 and/or LYPLA2. Palmitoylation of SCRIB by ZDHHC7 is required for its localization to cell-cell junctions, function in the establishement of epithelial cell polarity and the regulation of downstream signaling pathways important for epithelial cell differentiation. In terms of tissue distribution, expressed in CD4+ T-cells (at protein level). Found in a wide range of tissues including liver, kidney and spleen. Also expressed in the brain (at protein level).

Its subcellular location is the cell membrane. It localises to the cell junction. The protein resides in the adherens junction. The protein localises to the cell projection. It is found in the lamellipodium. Its subcellular location is the cytoplasm. It localises to the postsynapse. The protein resides in the presynapse. Functionally, scaffold protein involved in different aspects of polarized cell differentiation regulating epithelial and neuronal morphogenesis and T-cell polarization. Via its interaction with CRTAM, required for the late phase polarization of a subset of CD4+ T-cells, which in turn regulates TCR-mediated proliferation and IFNG and IL22 production. Plays a role in cell directional movement, cell orientation, cell sheet organization and Golgi complex polarization at the cell migration front. Promotes epithelial cell layer barrier function via maintaining cell-cell adhesion. Most probably functions in the establishment of apico-basal cell polarity. May function in cell proliferation regulating progression from G1 to S phase and as a positive regulator of apoptosis for instance during acinar morphogenesis of the mammary epithelium. May regulate cell invasion via MAPK-mediated cell migration and adhesion. May play a role in exocytosis and in the targeting of synaptic vesicles to synapses. Functions as an activator of Rac GTPase activity. This chain is Protein scribble homolog, found in Mus musculus (Mouse).